The following is a 126-amino-acid chain: Profilin-1B (126 aa).

The segment at S2–F36 is actin binding. K104 is subject to N6,N6,N6-trimethyllysine.

The protein belongs to the profilin family. Occurs in many kinds of cells as a complex with monomeric actin in a 1:1 ratio.

It localises to the cytoplasm. The protein localises to the cytoskeleton. Binds to actin and affects the structure of the cytoskeleton. At high concentrations, profilin prevents the polymerization of actin, whereas it enhances it at low concentrations. By binding to PIP2, it inhibits the formation of IP3 and DG. The protein is Profilin-1B of Acanthamoeba castellanii (Amoeba).